We begin with the raw amino-acid sequence, 309 residues long: Homoserine O-succinyltransferase (309 aa).

Cysteine 142 (acyl-thioester intermediate) is an active-site residue. The substrate site is built by lysine 163 and serine 192. Histidine 235 functions as the Proton acceptor in the catalytic mechanism. Glutamate 237 is a catalytic residue. A substrate-binding site is contributed by arginine 249.

This sequence belongs to the MetA family. Homodimer.

Its subcellular location is the cytoplasm. It carries out the reaction L-homoserine + succinyl-CoA = O-succinyl-L-homoserine + CoA. It participates in amino-acid biosynthesis; L-methionine biosynthesis via de novo pathway; O-succinyl-L-homoserine from L-homoserine: step 1/1. In terms of biological role, transfers a succinyl group from succinyl-CoA to L-homoserine, forming succinyl-L-homoserine. The protein is Homoserine O-succinyltransferase of Escherichia fergusonii (strain ATCC 35469 / DSM 13698 / CCUG 18766 / IAM 14443 / JCM 21226 / LMG 7866 / NBRC 102419 / NCTC 12128 / CDC 0568-73).